Consider the following 203-residue polypeptide: Imidazoleglycerol-phosphate dehydratase (203 aa).

Belongs to the imidazoleglycerol-phosphate dehydratase family.

Its subcellular location is the cytoplasm. It catalyses the reaction D-erythro-1-(imidazol-4-yl)glycerol 3-phosphate = 3-(imidazol-4-yl)-2-oxopropyl phosphate + H2O. Its pathway is amino-acid biosynthesis; L-histidine biosynthesis; L-histidine from 5-phospho-alpha-D-ribose 1-diphosphate: step 6/9. This is Imidazoleglycerol-phosphate dehydratase from Salinispora tropica (strain ATCC BAA-916 / DSM 44818 / JCM 13857 / NBRC 105044 / CNB-440).